A 453-amino-acid chain; its full sequence is uncharacterized protein (453 aa).

2 disordered regions span residues 183-210 (GNGR…RSLS) and 428-453 (PDSM…QYSK). The span at 198 to 207 (TKAHNYKTRR) shows a compositional bias: basic residues. Residues 433 to 453 (HPPTFSKNNTSSNPKSHQYSK) show a composition bias toward polar residues.

This is an uncharacterized protein from Saccharomyces cerevisiae (strain ATCC 204508 / S288c) (Baker's yeast).